The following is a 319-amino-acid chain: Telomere-binding protein cav (319 aa).

The required for binding to Su(var)205 stretch occupies residues 107-312 (RRKMVQPYPE…SISFQNSGSE (206 aa)). 2 disordered regions span residues 141-163 (WQKQ…DNEV) and 186-248 (PSDL…PDYY). Short sequence motifs (su(var)205-binding Pro-containing repeat) lie at residues 220-224 (PETQM) and 273-279 (PETEMNE). The span at 291–311 (SMSIGPSINSDGSISFQNSGS) shows a compositional bias: polar residues. The segment at 291 to 319 (SMSIGPSINSDGSISFQNSGSEPIDVDVN) is disordered.

In terms of assembly, interacts (via C-terminus) with Su(var)205 dimer (via hinge and chromoshadow domain) and with moi to form the terminin, telomere-capping, complex. Interacts with HP6, which is also part of the terminin complex.

The protein localises to the nucleus. The protein resides in the chromosome. It localises to the telomere. In terms of biological role, binds to chromosome ends in a sequence-dependent manner and is required for telomere capping. This is Telomere-binding protein cav from Drosophila yakuba (Fruit fly).